Consider the following 435-residue polypeptide: ATP-dependent protease ATPase subunit HslU (435 aa).

Residues I18, 60-65 (GVGKTE), D248, E313, and R385 each bind ATP.

The protein belongs to the ClpX chaperone family. HslU subfamily. As to quaternary structure, a double ring-shaped homohexamer of HslV is capped on each side by a ring-shaped HslU homohexamer. The assembly of the HslU/HslV complex is dependent on binding of ATP.

It localises to the cytoplasm. Functionally, ATPase subunit of a proteasome-like degradation complex; this subunit has chaperone activity. The binding of ATP and its subsequent hydrolysis by HslU are essential for unfolding of protein substrates subsequently hydrolyzed by HslV. HslU recognizes the N-terminal part of its protein substrates and unfolds these before they are guided to HslV for hydrolysis. This is ATP-dependent protease ATPase subunit HslU from Rhizobium meliloti (strain 1021) (Ensifer meliloti).